Consider the following 370-residue polypeptide: Translocating chain-associated membrane protein 2 (370 aa).

The Cytoplasmic segment spans residues Met-1–His-22. The chain crosses the membrane as a helical span at residues Ala-23–Ala-43. At Lys-44 to Leu-75 the chain is on the extracellular side. An N-linked (GlcNAc...) asparagine glycan is attached at Asn-55. The helical transmembrane segment at Val-76 to Ile-96 threads the bilayer. Over Leu-97–Gln-119 the chain is Cytoplasmic. The region spanning Ser-112–Tyr-321 is the TLC domain. Residues Leu-120–Tyr-140 form a helical membrane-spanning segment. At Leu-141–Gln-159 the chain is on the extracellular side. The helical transmembrane segment at Val-160–Phe-180 threads the bilayer. Over Gln-181 to Gln-191 the chain is Cytoplasmic. The helical transmembrane segment at Leu-192–Asn-209 threads the bilayer. Topologically, residues Leu-210 to Gly-214 are extracellular. The chain crosses the membrane as a helical span at residues Leu-215–Tyr-235. The Cytoplasmic portion of the chain corresponds to Phe-236 to Ala-250. Residues Val-251 to Leu-271 traverse the membrane as a helical segment. Topologically, residues Ala-272–Asn-287 are extracellular. The chain crosses the membrane as a helical span at residues Thr-288–Trp-308. Residues Arg-309–Pro-370 are Cytoplasmic-facing. Positions Tyr-348–Pro-370 are disordered.

This sequence belongs to the TRAM family. In terms of assembly, interacts with SERCA2B and COL1A1.

It localises to the membrane. In terms of biological role, necessary for collagen type I synthesis. May couple the activity of the ER Ca(2+) pump SERCA2B with the activity of the translocon. This coupling may increase the local Ca(2+) concentration at the site of collagen synthesis, and a high Ca(2+) concentration may be necessary for the function of molecular chaperones involved in collagen folding. Required for proper insertion of the first transmembrane helix N-terminus of TM4SF20 into the ER lumen, may act as a ceramide sensor for regulated alternative translocation (RAT). This is Translocating chain-associated membrane protein 2 (TRAM2) from Homo sapiens (Human).